The chain runs to 324 residues: Beta-ketoacyl-[acyl-carrier-protein] synthase III (324 aa).

Catalysis depends on residues cysteine 112 and histidine 251. The interval 252–256 (QANLR) is ACP-binding. The active site involves asparagine 281.

The protein belongs to the thiolase-like superfamily. FabH family. Homodimer.

The protein resides in the cytoplasm. The catalysed reaction is malonyl-[ACP] + acetyl-CoA + H(+) = 3-oxobutanoyl-[ACP] + CO2 + CoA. Its pathway is lipid metabolism; fatty acid biosynthesis. Catalyzes the condensation reaction of fatty acid synthesis by the addition to an acyl acceptor of two carbons from malonyl-ACP. Catalyzes the first condensation reaction which initiates fatty acid synthesis and may therefore play a role in governing the total rate of fatty acid production. Possesses both acetoacetyl-ACP synthase and acetyl transacylase activities. Its substrate specificity determines the biosynthesis of branched-chain and/or straight-chain of fatty acids. The chain is Beta-ketoacyl-[acyl-carrier-protein] synthase III from Clostridium perfringens (strain 13 / Type A).